Reading from the N-terminus, the 662-residue chain is Pro-neuregulin-1, membrane-bound isoform (662 aa).

A propeptide spanning residues 1-13 (MSERKEGRGKGKG) is cleaved from the precursor. The disordered stretch occupies residues 1–52 (MSERKEGRGKGKGKKKDRGSRGKPGPAEGDPSPALPPRLKEMKSQESAAGSK). The Extracellular portion of the chain corresponds to 14–265 (KKKDRGSRGK…SKAEELYQKR (252 aa)). The Ig-like C2-type domain occupies 37 to 128 (PRLKEMKSQE…GNDSASANIT (92 aa)). The cysteines at positions 57 and 112 are disulfide-linked. Asn120, Asn126, and Asn164 each carry an N-linked (GlcNAc...) asparagine glycan. Residues 178-222 (HLIKCAEKEKTFCVNGGECFTVKDLSNPSRYLCKCPNEFTGDRCQ) form the EGF-like domain. Intrachain disulfides connect Cys182-Cys196, Cys190-Cys210, and Cys212-Cys221. Residues 266-288 (VLTITGICIALLVVGIMCVVAYC) traverse the membrane as a helical segment. Over 289 to 662 (KTKKQRQKLH…VIANQDPIAV (374 aa)) the chain is Cytoplasmic. Residues 358 to 373 (SHYTSTAHHSTTVTQT) are compositionally biased toward low complexity. Disordered regions lie at residues 358–383 (SHYTSTAHHSTTVTQTPSHSWSNGHT), 398–480 (SVEN…PVSS), and 547–610 (YETT…DTPF). Residues 374–383 (PSHSWSNGHT) show a composition bias toward polar residues. Gly residues predominate over residues 410 to 420 (GPRGRLHGLGG). Basic and acidic residues predominate over residues 425–445 (SFLRHARETPDSYRDSPHSER). The segment covering 564-574 (TNSRRAKRTKP) has biased composition (basic residues). A compositionally biased stretch (low complexity) spans 585–596 (DSNTSSVSSNSE).

This sequence belongs to the neuregulin family. As to quaternary structure, the cytoplasmic domain interacts with the LIM domain region of LIMK1. Forms a ternary complex with ERBB3 and ITGAV:ITGB3 or ITGA6:ITGB4. Interacts with NRDC and BACE1. In terms of processing, proteolytic cleavage close to the plasma membrane on the external face leads to the release of the soluble growth factor form. N- and O-glycosylated. Extensive glycosylation precedes the proteolytic cleavage. As to expression, widely expressed. Most tissues contain isoform alpha2A and isoform alpha2B. Isoform Alpha2 and isoform beta2 are the predominant forms in mesenchymal and non-neuronal organs. Isoform Beta1 is enriched in brain and spinal cord, but not in muscle and heart. Isoform Alpha2C is highly expressed in spinal cord, moderately in lung, brain, ovary, and stomach, in low amounts in the kidney, skin and heart and not detected in the liver, spleen, and placenta.

It localises to the cell membrane. The protein resides in the secreted. Direct ligand for ERBB3 and ERBB4 tyrosine kinase receptors. Concomitantly recruits ERBB1 and ERBB2 coreceptors, resulting in ligand-stimulated tyrosine phosphorylation and activation of the ERBB receptors. The multiple isoforms perform diverse functions such as inducing growth and differentiation of epithelial, glial, neuronal, and skeletal muscle cells; inducing expression of acetylcholine receptor in synaptic vesicles during the formation of the neuromuscular junction; stimulating lobuloalveolar budding and milk production in the mammary gland and inducing differentiation of mammary tumor cells; stimulating Schwann cell proliferation; implication in the development of the myocardium such as trabeculation of the developing heart. Binds to ERBB4 and ERBB3. Acts as a ligand for integrins and binds (via EGF domain) to integrins ITGAV:ITGB3 or ITGA6:ITGB4. Its binding to integrins and subsequent ternary complex formation with integrins and ERRB3 are essential for NRG1-ERBB signaling. Induces the phosphorylation and activation of MAPK3/ERK1, MAPK1/ERK2 and AKT1, and ligand-dependent ERBB4 endocytosis is essential for the NRG1-mediated activation of these kinases in neurons. The chain is Pro-neuregulin-1, membrane-bound isoform (Nrg1) from Rattus norvegicus (Rat).